We begin with the raw amino-acid sequence, 500 residues long: Aspartyl/glutamyl-tRNA(Asn/Gln) amidotransferase subunit B (500 aa).

This sequence belongs to the GatB/GatE family. GatB subfamily. As to quaternary structure, heterotrimer of A, B and C subunits.

It carries out the reaction L-glutamyl-tRNA(Gln) + L-glutamine + ATP + H2O = L-glutaminyl-tRNA(Gln) + L-glutamate + ADP + phosphate + H(+). The enzyme catalyses L-aspartyl-tRNA(Asn) + L-glutamine + ATP + H2O = L-asparaginyl-tRNA(Asn) + L-glutamate + ADP + phosphate + 2 H(+). Allows the formation of correctly charged Asn-tRNA(Asn) or Gln-tRNA(Gln) through the transamidation of misacylated Asp-tRNA(Asn) or Glu-tRNA(Gln) in organisms which lack either or both of asparaginyl-tRNA or glutaminyl-tRNA synthetases. The reaction takes place in the presence of glutamine and ATP through an activated phospho-Asp-tRNA(Asn) or phospho-Glu-tRNA(Gln). The chain is Aspartyl/glutamyl-tRNA(Asn/Gln) amidotransferase subunit B from Brucella melitensis biotype 2 (strain ATCC 23457).